The sequence spans 348 residues: S-adenosylmethionine:tRNA ribosyltransferase-isomerase (348 aa).

The protein belongs to the QueA family. Monomer.

It localises to the cytoplasm. It carries out the reaction 7-aminomethyl-7-carbaguanosine(34) in tRNA + S-adenosyl-L-methionine = epoxyqueuosine(34) in tRNA + adenine + L-methionine + 2 H(+). It functions in the pathway tRNA modification; tRNA-queuosine biosynthesis. Transfers and isomerizes the ribose moiety from AdoMet to the 7-aminomethyl group of 7-deazaguanine (preQ1-tRNA) to give epoxyqueuosine (oQ-tRNA). The chain is S-adenosylmethionine:tRNA ribosyltransferase-isomerase from Cytophaga hutchinsonii (strain ATCC 33406 / DSM 1761 / CIP 103989 / NBRC 15051 / NCIMB 9469 / D465).